The primary structure comprises 101 residues: Small ribosomal subunit protein uS14 (101 aa).

Belongs to the universal ribosomal protein uS14 family. In terms of assembly, part of the 30S ribosomal subunit. Contacts proteins S3 and S10.

Binds 16S rRNA, required for the assembly of 30S particles and may also be responsible for determining the conformation of the 16S rRNA at the A site. This Pseudoalteromonas atlantica (strain T6c / ATCC BAA-1087) protein is Small ribosomal subunit protein uS14.